Consider the following 200-residue polypeptide: Glycerol-3-phosphate acyltransferase (200 aa).

Helical transmembrane passes span 1–21, 84–104, 116–136, and 159–179; these read MITV…FAVV, VIAG…FLAF, ILLG…MVVA, and FLLE…LLIL.

Belongs to the PlsY family. Probably interacts with PlsX.

The protein localises to the cell inner membrane. It catalyses the reaction an acyl phosphate + sn-glycerol 3-phosphate = a 1-acyl-sn-glycero-3-phosphate + phosphate. The protein operates within lipid metabolism; phospholipid metabolism. Functionally, catalyzes the transfer of an acyl group from acyl-phosphate (acyl-PO(4)) to glycerol-3-phosphate (G3P) to form lysophosphatidic acid (LPA). This enzyme utilizes acyl-phosphate as fatty acyl donor, but not acyl-CoA or acyl-ACP. The polypeptide is Glycerol-3-phosphate acyltransferase (Nitrosomonas europaea (strain ATCC 19718 / CIP 103999 / KCTC 2705 / NBRC 14298)).